A 216-amino-acid chain; its full sequence is Ribosomal RNA small subunit methyltransferase G (216 aa).

S-adenosyl-L-methionine-binding positions include Gly81, Phe86, 130–131, and Arg144; that span reads AE.

It belongs to the methyltransferase superfamily. RNA methyltransferase RsmG family.

Its subcellular location is the cytoplasm. It carries out the reaction guanosine(527) in 16S rRNA + S-adenosyl-L-methionine = N(7)-methylguanosine(527) in 16S rRNA + S-adenosyl-L-homocysteine. Its function is as follows. Specifically methylates the N7 position of guanine in position 527 of 16S rRNA. This Rhodospirillum centenum (strain ATCC 51521 / SW) protein is Ribosomal RNA small subunit methyltransferase G.